The sequence spans 219 residues: MOB kinase activator-like 1 (219 aa).

Cysteine 79, cysteine 84, histidine 161, and histidine 166 together coordinate Zn(2+).

It belongs to the MOB1/phocein family. In terms of assembly, interacts with and activates trc and wts. Post-translationally, phosphorylated by wts/mats kinase complex. Activated by phosphorylation by Hippo (Hpo) kinase which increases its affinity and its ability to activate Warts (Wts) kinase. Ubiquitously expressed at low levels in developing tissues (at protein level).

Its subcellular location is the cytoplasm. It is found in the cytoskeleton. It localises to the microtubule organizing center. The protein localises to the centrosome. The protein resides in the nucleus. Its subcellular location is the cytosol. It is found in the cell membrane. In terms of biological role, coactivator of Warts (Wts) kinase in the Hippo/SWH (Sav/Wts/Hpo)signaling pathway, a signaling pathway that plays a pivotal role in organ size control and tumor suppression by restricting proliferation and promoting apoptosis. The core of this pathway is composed of a kinase cascade wherein Hippo (Hpo), in complex with its regulatory protein Salvador (Sav), phosphorylates and activates Warts (Wts) in complex with its regulatory protein Mats, which in turn phosphorylates and inactivates the Yorkie (Yki)oncoprotein. The Hippo/SWH signaling pathway inhibits the activity of the transcriptional complex formed by Scalloped (sd) and Yki and the target genes of this pathway include cyclin-E (cycE), diap1 and bantam. Mats is essential for early development and is required for proper chromosomal segregation in developing embryos. The chain is MOB kinase activator-like 1 from Drosophila melanogaster (Fruit fly).